Reading from the N-terminus, the 147-residue chain is Cyanate hydratase (147 aa).

Active-site residues include R88, E91, and S114.

This sequence belongs to the cyanase family.

The catalysed reaction is cyanate + hydrogencarbonate + 3 H(+) = NH4(+) + 2 CO2. Catalyzes the reaction of cyanate with bicarbonate to produce ammonia and carbon dioxide. The chain is Cyanate hydratase from Polaromonas sp. (strain JS666 / ATCC BAA-500).